Here is a 418-residue protein sequence, read N- to C-terminus: Vasopressin V1a receptor (418 aa).

The segment at 1–43 (MRLSAGPDAGPSGNSSPWWPLATGAGNTSREAEALGEGNGPPR) is disordered. Residues 1 to 52 (MRLSAGPDAGPSGNSSPWWPLATGAGNTSREAEALGEGNGPPRDVRNEELAK) are Extracellular-facing. Asparagine 27 is a glycosylation site (N-linked (GlcNAc...) asparagine). A helical membrane pass occupies residues 53–76 (LEIAVLAVTFAVAVLGNSSVLLAL). The Cytoplasmic portion of the chain corresponds to 77 to 88 (HRTPRKTSRMHL). A helical membrane pass occupies residues 89 to 110 (FIRHLSLADLAVAFFQVLPQMC). Topologically, residues 111–125 (WDITYRFRGPDWLCR) are extracellular. A disulfide bridge connects residues cysteine 124 and cysteine 203. Residues 126–147 (VVKHLQVFGMFASAYMLVVMTA) form a helical membrane-spanning segment. Residues 148–168 (DRYIAVCHPLKTLQQPARRSR) are Cytoplasmic-facing. Residues 169 to 190 (LMIAAAWVLSFVLSTPQYFVFS) traverse the membrane as a helical segment. The Extracellular segment spans residues 191 to 218 (MIEVNNVTKARDCWATFIQPWGSRAYVT). A glycan (N-linked (GlcNAc...) asparagine) is linked at asparagine 196. A helical transmembrane segment spans residues 219–239 (WMTGGIFVAPVVILGTCYGFI). Residues 240–293 (CYNIWCNVRGKTASRQSKGAEQAGVAFQKGFLLAPCVSSVKSISRAKIRTVKMT) lie on the Cytoplasmic side of the membrane. The chain crosses the membrane as a helical span at residues 294 to 313 (FVIVTAYIVCWAPFFIIQMW). At 314 to 331 (SVWDPMSVWTESENPTIT) the chain is on the extracellular side. Residues 332–351 (ITALLGSLNSCCNPWIYMFF) form a helical membrane-spanning segment. Residues 352-418 (SGHLLQDCVQ…KSIKFIPVST (67 aa)) lie on the Cytoplasmic side of the membrane. S-palmitoyl cysteine attachment occurs at residues cysteine 365 and cysteine 366. Residues 377–410 (DTDSMSRRQTFYSNNRSPTNSTGMWKDSPKSSKS) are disordered. Positions 383–399 (RRQTFYSNNRSPTNSTG) are enriched in polar residues. A Phosphoserine modification is found at serine 404.

This sequence belongs to the G-protein coupled receptor 1 family. Vasopressin/oxytocin receptor subfamily.

It is found in the cell membrane. In terms of biological role, receptor for arginine vasopressin. The activity of this receptor is mediated by G proteins which activate a phosphatidyl-inositol-calcium second messenger system. Has been involved in social behaviors, including affiliation and attachment. The polypeptide is Vasopressin V1a receptor (AVPR1A) (Homo sapiens (Human)).